A 220-amino-acid chain; its full sequence is MKKVLITGFEPFGGDSKNPTEQIAKYFDRKQIGNAMVYGRVLPVSVKRATIELKRYLEEIKPEIVINLGLAPTYSNITVERIAVNIIDARIPDNDGYQPIDEKIEEDAPLAYMATLPVRAITKTLRDNGIPATISYSAGTYLCNYVMFKTLHFSKIEGYPLKAGFIHVPYTPDQVVNKFFLLGKNTPSMCLEAEIKAIELAVKVSLDYLEKDRDDIKIPL.

Active-site residues include Glu-80, Cys-143, and His-167.

The protein belongs to the peptidase C15 family. Homotetramer.

The protein resides in the cytoplasm. The catalysed reaction is Release of an N-terminal pyroglutamyl group from a polypeptide, the second amino acid generally not being Pro.. Its function is as follows. Removes 5-oxoproline from various penultimate amino acid residues except L-proline. This Thermococcus litoralis (strain ATCC 51850 / DSM 5473 / JCM 8560 / NS-C) protein is Pyrrolidone-carboxylate peptidase (pcp).